Reading from the N-terminus, the 389-residue chain is Phospho-N-acetylmuramoyl-pentapeptide-transferase (389 aa).

The next 10 helical transmembrane spans lie at 25–45, 73–93, 97–117, 135–155, 190–210, 222–242, 258–278, 286–306, 311–331, and 366–386; these read RAVMATVTALLIGLAAGPWVI, TMGGVLILIGIFVSCMLWADL, FIWIVMIVTFGFGAVGWVDDY, FWQTLIGLFAAIYLAFSVSEI, VSYPLGMMGFIILSYLVIVGS, GLVIMPVILVGAALGAFAYVM, GAGELMIFCGAMGGAGLAFLW, VFMGDVGALALGGALGTIAVI, IVLFVMGGIFVAETVSVMMQV, and QVVVRFWIITILLVLIGLSSL.

It belongs to the glycosyltransferase 4 family. MraY subfamily. The cofactor is Mg(2+).

It is found in the cell inner membrane. The enzyme catalyses UDP-N-acetyl-alpha-D-muramoyl-L-alanyl-gamma-D-glutamyl-meso-2,6-diaminopimeloyl-D-alanyl-D-alanine + di-trans,octa-cis-undecaprenyl phosphate = di-trans,octa-cis-undecaprenyl diphospho-N-acetyl-alpha-D-muramoyl-L-alanyl-D-glutamyl-meso-2,6-diaminopimeloyl-D-alanyl-D-alanine + UMP. The protein operates within cell wall biogenesis; peptidoglycan biosynthesis. Its function is as follows. Catalyzes the initial step of the lipid cycle reactions in the biosynthesis of the cell wall peptidoglycan: transfers peptidoglycan precursor phospho-MurNAc-pentapeptide from UDP-MurNAc-pentapeptide onto the lipid carrier undecaprenyl phosphate, yielding undecaprenyl-pyrophosphoryl-MurNAc-pentapeptide, known as lipid I. The polypeptide is Phospho-N-acetylmuramoyl-pentapeptide-transferase (Polynucleobacter asymbioticus (strain DSM 18221 / CIP 109841 / QLW-P1DMWA-1) (Polynucleobacter necessarius subsp. asymbioticus)).